The primary structure comprises 455 residues: Oxidative stress induced growth inhibitor homolog osgn-1 (455 aa).

It belongs to the OKL38 family. NADPH serves as cofactor.

Its subcellular location is the midbody. Its function is as follows. Monooxygenase catalytic activity. Involved in regulation of cytokinesis; promotes rho-1/RhoA activity, probably acting locally at the midbody in late cytokinesis. Monooxygenase activity is required to stabilize structures between primordial germ cells (PGCs), termed intercellular bridges. Dispensable for fertility. This chain is Oxidative stress induced growth inhibitor homolog osgn-1, found in Caenorhabditis elegans.